The primary structure comprises 1021 residues: Solute carrier family 12 member 3 (1021 aa).

Topologically, residues 1-137 (MAELPTTETP…KNPEEPVRFG (137 aa)) are cytoplasmic. Serine 43 is subject to Phosphoserine. Threonine 46 carries the phosphothreonine; by OXSR1 and STK39 modification. Serine 49 is subject to Phosphoserine. Phosphothreonine is present on threonine 50. Phosphothreonine; by OXSR1 and STK39 occurs at positions 55 and 60. Serine 73 carries the phosphoserine modification. A Phosphoserine; by OXSR1 and STK39 modification is found at serine 91. Position 124 is a phosphothreonine (threonine 124). Position 126 is a phosphoserine (serine 126). Residues 138–167 (WVKGVMIRCMLNIWGVILYLRLPWITAQAG) traverse the membrane as a discontinuously helical segment. Leucine 148 is a binding site for Na(+). Asparagine 149 is a binding site for polythiazide. A Na(+)-binding site is contributed by tryptophan 151. The chain crosses the membrane as a helical span at residues 168-189 (IVLTWIIILLSVTVTSITGLSI). The Cytoplasmic portion of the chain corresponds to 190-220 (SAISTNGKVKSGGTYFLISRSLGPELGGSIG). A helical transmembrane segment spans residues 221 to 243 (LIFAFANAVGVAMHTVGFAETVR). The polythiazide site is built by asparagine 227 and histidine 234. Over 244 to 255 (DLLQEYGAPIVD) the chain is Extracellular. 2 helical membrane passes run 256–280 (PINDIRIIAVVSVTVLLAISLAGME) and 281–303 (WESKAQVLFFLVIMVSFANYLVG). The Extracellular portion of the chain corresponds to 304–338 (TLIPPSEDKASKGFFSYRADIFVQNLVPDWRGPDG). Residues 339–360 (TFFGMFSIFFPSATGILAGANI) form a discontinuously helical membrane-spanning segment. A polythiazide-binding site is contributed by threonine 352. 3 residues coordinate chloride: glycine 353, isoleucine 354, and leucine 355. Asparagine 359 is a binding site for polythiazide. The Cytoplasmic portion of the chain corresponds to 361–371 (SGDLKDPAIAI). The chain crosses the membrane as a helical span at residues 372-393 (PKGTLMAIFWTTISYLAISATI). The Extracellular portion of the chain corresponds to 394–453 (GSCVVRDASGVLNDTVTPGWGACEGLACSYGWNFTECTQQHSCHYGLINYYQTMSMVSGF). Asparagine 406 carries N-linked (GlcNAc...) asparagine glycosylation. Cysteine 416 and cysteine 421 are joined by a disulfide. N-linked (GlcNAc...) asparagine glycosylation is present at asparagine 426. A disulfide bridge links cysteine 430 with cysteine 436. A helical transmembrane segment spans residues 454–477 (APLITAGIFGATLSSALACLVSAA). Alanine 464, serine 467, and serine 468 together coordinate Na(+). The Cytoplasmic portion of the chain corresponds to 478 to 507 (KVFQCLCEDQLYPLIGFFGKGYGKNKEPVR). The helical transmembrane segment at 508 to 522 (GYLLAYAIAVAFIII) threads the bilayer. The Extracellular portion of the chain corresponds to 523 to 527 (AELNT). A helical transmembrane segment spans residues 528–544 (IAPIISNFFLCSYALIN). Tyrosine 540 contacts chloride. Topologically, residues 545 to 567 (FSCFHASITNSPGWRPSFQYYNK) are cytoplasmic. 2 helical membrane passes run 568–587 (WAALFGAIISVVIMFLLTWW) and 588–599 (AALIAIGVVLFL). Residues 600 to 1021 (LLYVIYKKPE…QENVLTFYCQ (422 aa)) are Cytoplasmic-facing. The segment at 615–630 (SVQAGSYNLALSYSVG) is scissor helix. Residues leucine 648, arginine 655, valine 677, glycine 741, leucine 780, and asparagine 781 each contribute to the ATP site.

This sequence belongs to the SLC12A transporter family. As to quaternary structure, homodimer; adopts a domain-swap conformation at the scissor helices connecting the transmembrane domain and C-terminal domain. Interacts with KLHL3. Interacts with IL18R1; this interaction is increased by IL18 treatment. Post-translationally, ubiquitinated; ubiquitination is essential for regulation of endocytosis. The BCR(KLHL3) complex was initially identified as a candidate ubiquitin ligase for SLC12A3. However, it was later shown that it is not the case. In terms of processing, phosphorylated at Thr-46, Thr-55, Thr-60 and Ser-91 by OXSR1/OSR1 and STK39/SPAK downstream of WNK4, promoting its activity. Phosphorylated in response to IL18. Predominantly expressed in the kidney (at protein level). Localizes to the distal convoluted tubules (at protein level). Not detected in normal aorta, but abundantly expressed in fatty streaks and advanced atherosclerotic lesions (at protein level).

It is found in the cell membrane. Its subcellular location is the apical cell membrane. The catalysed reaction is chloride(out) + Na(+)(out) = chloride(in) + Na(+)(in). Its activity is regulated as follows. Phosphorylation by OXSR1/OSR1 and STK39/SPAK in kidney distal convoluted tubules downstream of WNK4 promotes its activity. Also activated by OXSR1/OSR1 and STK39/SPAK downstream of WNK3. Target of thiazide diuretics used in the treatment of high blood pressure. Thiazide drugs, such as polythiazide, specifically inhibit SLC12A3/NCC transporter activity by competing with chloride for binding and by locking SLC12A3/NCC in an outward-facing conformation. Its function is as follows. Electroneutral sodium and chloride ion cotransporter, which acts as a key mediator of sodium and chloride reabsorption in kidney distal convoluted tubules. Also acts as a receptor for the pro-inflammatory cytokine IL18, thereby contributing to IL18-induced cytokine production, including IFNG, IL6, IL18 and CCL2. May act either independently of IL18R1, or in a complex with IL18R1. This chain is Solute carrier family 12 member 3, found in Homo sapiens (Human).